Consider the following 410-residue polypeptide: Succinyl-CoA:(R)-benzylsuccinate CoA-transferase subunit BbsE (410 aa).

Belongs to the CoA-transferase III family. In terms of assembly, heterotetramer composed of 2 BbsE subunits and 2 BbsF subunits.

The enzyme catalyses (R)-2-benzylsuccinate + succinyl-CoA = (R)-2-benzylsuccinyl-CoA + succinate. It participates in xenobiotic degradation; toluene degradation. With respect to regulation, inhibited by (S)-benzylsuccinyl-CoA. In terms of biological role, catalyzes the reversible conversion of (R)-2-benzylsuccinate to (R)-2-benzylsuccinyl-CoA. Inactive with (S)-benzylsuccinate. This Thauera aromatica protein is Succinyl-CoA:(R)-benzylsuccinate CoA-transferase subunit BbsE (bbsE).